The chain runs to 520 residues: GMP synthase [glutamine-hydrolyzing] (520 aa).

Residues 9-202 enclose the Glutamine amidotransferase type-1 domain; sequence TILIIDFGSQ…VHRIVGVKPG (194 aa). Catalysis depends on cysteine 86, which acts as the Nucleophile. Catalysis depends on residues histidine 176 and glutamate 178. The GMPS ATP-PPase domain maps to 203–395; it reads WTMGAYREQA…LGLPDSFIGR (193 aa). Position 230–236 (230–236) interacts with ATP; sequence SGGVDSS.

As to quaternary structure, homodimer.

The enzyme catalyses XMP + L-glutamine + ATP + H2O = GMP + L-glutamate + AMP + diphosphate + 2 H(+). The protein operates within purine metabolism; GMP biosynthesis; GMP from XMP (L-Gln route): step 1/1. In terms of biological role, catalyzes the synthesis of GMP from XMP. The polypeptide is GMP synthase [glutamine-hydrolyzing] (Brucella ovis (strain ATCC 25840 / 63/290 / NCTC 10512)).